The sequence spans 478 residues: Transcript termination protein A18 (478 aa).

In terms of domain architecture, Helicase ATP-binding spans K98 to S254. An ATP-binding site is contributed by L111–T118. The short motif at D204–H207 is the DESH box element. The Helicase C-terminal domain maps to P302 to V468.

Belongs to the helicase family. Poxviruses subfamily. As to quaternary structure, interacts with G2. Might be part of a transcription complex composed at least of G2, A18, and H5.

It localises to the virion. DNA helicase which seems to act as a postreplicative transcription termination factor. Involved in ATP-dependent release of nascent RNA. Forms a stable complex with single-stranded DNA, and to a lesser extent RNA. The sequence is that of Transcript termination protein A18 from Rabbit fibroma virus (strain Kasza) (RFV).